We begin with the raw amino-acid sequence, 387 residues long: Transmembrane protein 120 homolog (387 aa).

Positions Met-1–Gln-39 form a coiled coil. An N-linked (GlcNAc...) asparagine glycan is attached at Asn-111. The next 6 membrane-spanning stretches (helical) occupy residues Phe-130 to Tyr-150, Leu-155 to Leu-175, Phe-191 to Ile-211, Phe-216 to Leu-238, Gly-264 to Trp-284, and Val-302 to Val-322. Residues Arg-346–Thr-387 form a disordered region. Phosphoserine occurs at positions 352, 354, and 365. Positions Ser-352–Pro-381 are enriched in low complexity.

The protein belongs to the TMEM120 family.

The protein localises to the membrane. The polypeptide is Transmembrane protein 120 homolog (Drosophila melanogaster (Fruit fly)).